A 216-amino-acid chain; its full sequence is Somatotropin (216 aa).

The first 26 residues, 1-26 (MAAGPRNSVLLAFALLCLPWPQEVGT), serve as a signal peptide directing secretion. Position 45 (His-45) interacts with Zn(2+). A disulfide bridge connects residues Cys-78 and Cys-189. Position 131 is a phosphoserine (Ser-131). Glu-198 contacts Zn(2+). Cys-206 and Cys-214 are disulfide-bonded.

The protein belongs to the somatotropin/prolactin family.

Its subcellular location is the secreted. Plays an important role in growth control. Its major role in stimulating body growth is to stimulate the liver and other tissues to secrete IGF1. It stimulates both the differentiation and proliferation of myoblasts. It also stimulates amino acid uptake and protein synthesis in muscle and other tissues. The protein is Somatotropin (GH1) of Felis catus (Cat).